The primary structure comprises 325 residues: Acetyl-coenzyme A carboxylase carboxyl transferase subunit alpha (325 aa).

The CoA carboxyltransferase C-terminal domain maps to 35-292; the sequence is EIEKLEARLT…DRVLRASLKQ (258 aa).

The protein belongs to the AccA family. In terms of assembly, acetyl-CoA carboxylase is a heterohexamer composed of biotin carboxyl carrier protein (AccB), biotin carboxylase (AccC) and two subunits each of ACCase subunit alpha (AccA) and ACCase subunit beta (AccD).

It is found in the cytoplasm. It carries out the reaction N(6)-carboxybiotinyl-L-lysyl-[protein] + acetyl-CoA = N(6)-biotinyl-L-lysyl-[protein] + malonyl-CoA. The protein operates within lipid metabolism; malonyl-CoA biosynthesis; malonyl-CoA from acetyl-CoA: step 1/1. Its function is as follows. Component of the acetyl coenzyme A carboxylase (ACC) complex. First, biotin carboxylase catalyzes the carboxylation of biotin on its carrier protein (BCCP) and then the CO(2) group is transferred by the carboxyltransferase to acetyl-CoA to form malonyl-CoA. This chain is Acetyl-coenzyme A carboxylase carboxyl transferase subunit alpha, found in Geobacillus thermodenitrificans (strain NG80-2).